The sequence spans 408 residues: MLPRPKAPASPRRPQTPTPSEQDADPGPASPRDTEAQRLRFRQFQYHVASGPHLALGQLWTLCRQWLRPEARSKEQMLELLVLEQFLGALPSKMRTWVQSQGPRSCREAASLVEDLTQMCQQEVLVSLDSVEPQDWSFGEEEDGKSPRSQKEPSQASELILDAVAAAPALPEESEWLETTQLQQSLHTRAEAEAPRAPGLLGSRARLPLKPSIWDEPEDLLAGPSSDLRAEGTVISSPKGPSAQRISPRRRNRNTDQSGRHQPSLKHTKGGTQEAVAGISVVPRGPRGGRPFQCADCGMVFTWVTHFIEHQKTHREEGPFPCPECGKVFLHNSVLTEHGKIHLLEPPRKKAPRSKGPRESVPPRDGAQGPVAPRSPKRPFQCSVCGKAFPWMVHLIDHQKLHTAHGHM.

The segment at 1–34 (MLPRPKAPASPRRPQTPTPSEQDADPGPASPRDT) is disordered. The SCAN box domain maps to 38-120 (RLRFRQFQYH…SLVEDLTQMC (83 aa)). 3 disordered regions span residues 136–155 (WSFG…EPSQ), 177–203 (LETT…LLGS), and 215–273 (DEPE…GGTQ). Over residues 177–187 (LETTQLQQSLH) the composition is skewed to polar residues. 2 consecutive C2H2-type zinc fingers follow at residues 292–314 (FQCA…QKTH) and 320–342 (FPCP…GKIH). Residues 344–379 (LEPPRKKAPRSKGPRESVPPRDGAQGPVAPRSPKRP) form a disordered region. Residues 380–402 (FQCSVCGKAFPWMVHLIDHQKLH) form a C2H2-type 3 zinc finger.

The protein resides in the nucleus. Functionally, may be involved in transcriptional regulation. The protein is Zinc finger and SCAN domain-containing protein 1 (ZSCAN1) of Homo sapiens (Human).